A 148-amino-acid polypeptide reads, in one-letter code: Small ribosomal subunit protein bS6 (148 aa).

A disordered region spans residues 96 to 148; that stretch reads HEEGQSAMLTRRDDRRERDGDDRPRRREGGFDRGDRGDRGPRRPRDTEAGEGA.

This sequence belongs to the bacterial ribosomal protein bS6 family.

Binds together with bS18 to 16S ribosomal RNA. The protein is Small ribosomal subunit protein bS6 of Brucella canis (strain ATCC 23365 / NCTC 10854 / RM-666).